Here is a 605-residue protein sequence, read N- to C-terminus: MEADIITNLRCRLKEAEEERLKAAQYGLQLVESQNELQNQLDKCRNEMMTMTESYEQEKYTLQREVELKSRMLESLSCECEAIKQQQKMHLEKLEEQLSRSHGQEVNELKTKIEKLKVELDEARLSEKQLKHQVDHQKELLSCKSEELRVMSERVQESMSSEMLALQIELTEMESMKTTLKEEVNELQYRQEQLELLITNLMRQVDRLKEEKEEREKEAVSYYNALEKARVANQDLQVQLDQALQQALDPNSKGNSLFAEVEDRRAAMERQLISMKVKYQSLKKQNVFNREQMQRMKLQIATLLQMKGSQTEFEQQERLLAMLEQKNGEIKHLLGEIRNLEKFKNLYDSMESKPSVDSGTLEDNTYYTDLLQMKLDNLNKEIESTKGELSIQRMKALFESQRALDIERKLFANERCLQLSESENMKLRAKLDELKLKYEPEETVEVPVLKKRREVLPVDITTAKDACVNNSALGGEVYRLPPQKEETQSCPNSLEDNNLQLEKSVSIYTPVVSLSPHKNLPVDMQLKKEKKCVKLIGVPADAEALSERSGNTPNSPRLAAESKLQTEVKEGKETSSKLEKETCKKLHPILYVSSKSTPETQCPQQ.

M1 is modified (N-acetylmethionine). A coiled-coil region spans residues E2–E442. A phosphoserine mark is found at S513, S515, and S555. A disordered region spans residues A544–K580. Residues L564 to K580 are compositionally biased toward basic and acidic residues.

Belongs to the Spindly family. In terms of assembly, interacts with KNTC1 and ZW10. These interactions appear weak and may be transient or indirect. Interacts with dynein intermediate chain and dynactin (DCTN1). Interacts with the catalytically active form of USP45. Post-translationally, monoubiquitinated with'Lys-48' linkage. Deubiquitinated by USP45.

It is found in the cytoplasm. Its subcellular location is the cytoskeleton. It localises to the microtubule organizing center. The protein localises to the centrosome. The protein resides in the chromosome. It is found in the centromere. Its subcellular location is the kinetochore. It localises to the nucleus. The protein localises to the spindle pole. In terms of biological role, required for the localization of dynein and dynactin to the mitotic kintochore. Dynein is believed to control the initial lateral interaction between the kinetochore and spindle microtubules and to facilitate the subsequent formation of end-on kinetochore-microtubule attachments mediated by the NDC80 complex. Also required for correct spindle orientation. Does not appear to be required for the removal of spindle assembly checkpoint (SAC) proteins from the kinetochore upon bipolar spindle attachment. Acts as an adapter protein linking the dynein motor complex to various cargos and converts dynein from a non-processive to a highly processive motor in the presence of dynactin. Facilitates the interaction between dynein and dynactin and activates dynein processivity (the ability to move along a microtubule for a long distance without falling off the track). Plays a role in cell migration. The polypeptide is Protein Spindly (Homo sapiens (Human)).